The chain runs to 621 residues: MALLQISEPGMSPAPHQRRLAVGIDLGTTNSLVAAVRNSIPEVLPDEHGRALLPSVVRYLPNGNAHIGYKAQDEAVRDPKNTIISVKRFMGRGVRDVANIEHSLYDFVDAPGMVQLKTAAGIKSPVEVSAEILATLRQRAEDSLGDELVGAVITVPAYFDDAQRQATKDAAQLAGLEVLRLLNEPTAAAIAYGLDNAAEGIYAVYDLGGGTFDISVLKLTKGVFEVMSTGGDSALGGDDFDQRLLCWIVEQVGLQPLSAEDSRLLMVRARAAKEALSSSDSTVIDAVLTSGEIVHLTLDADTFIQITANLVQKTLTPVRKALRDAGVGPEDVKGVVLVGGATRMPAIRKAVGDYFGQQPLTNLDPDRVVALGAAMQANLLAGNHAPGEDWLLLDVIPLSLGVETMGGLVEKIVPRNSTIPVARAQEFTTFKDGQTAMAIHVLQGERELASDCRSLARFELRGIPPMVAGAARIRVTYQVDADGLLSVSARETGSGVEASVSVKPSYGLADDDIARMLQESFQEAEHDMKNRALAEERVEAARLVEATTRALETDGNLLSADERAAVDELMANVSEIAKGEDHRAIKAAVERLSQGTDEFAARRMDRSIKSALAGKKVQEIG.

This sequence belongs to the heat shock protein 70 family.

Functionally, chaperone involved in the maturation of iron-sulfur cluster-containing proteins. Has a low intrinsic ATPase activity which is markedly stimulated by HscB. The polypeptide is Chaperone protein HscA homolog (Cupriavidus metallidurans (strain ATCC 43123 / DSM 2839 / NBRC 102507 / CH34) (Ralstonia metallidurans)).